A 273-amino-acid polypeptide reads, in one-letter code: Secretory carrier-associated membrane protein 6 (273 aa).

Residues methionine 1 to glutamate 69 form a disordered region. The Cytoplasmic portion of the chain corresponds to methionine 1–alanine 131. Positions asparagine 20 to serine 30 are enriched in gly residues. Residues arginine 68–alanine 94 are a coiled coil. Helical transmembrane passes span serine 132–isoleucine 152, leucine 159–tyrosine 179, phenylalanine 194–alanine 214, and isoleucine 239–isoleucine 259. At glycine 260–lysine 273 the chain is on the cytoplasmic side.

It belongs to the SCAMP family.

It is found in the cell membrane. The protein resides in the cytoplasmic vesicle. The protein localises to the secretory vesicle membrane. Probably involved in membrane trafficking. This Oryza sativa subsp. japonica (Rice) protein is Secretory carrier-associated membrane protein 6 (SCAMP6).